The primary structure comprises 208 residues: Small ribosomal subunit protein uS4 (208 aa).

The 69-residue stretch at 98–166 (SRLDNVVYRM…VKEAIEASRN (69 aa)) folds into the S4 RNA-binding domain.

It belongs to the universal ribosomal protein uS4 family. In terms of assembly, part of the 30S ribosomal subunit. Contacts protein S5. The interaction surface between S4 and S5 is involved in control of translational fidelity.

One of the primary rRNA binding proteins, it binds directly to 16S rRNA where it nucleates assembly of the body of the 30S subunit. In terms of biological role, with S5 and S12 plays an important role in translational accuracy. This Kosmotoga olearia (strain ATCC BAA-1733 / DSM 21960 / TBF 19.5.1) protein is Small ribosomal subunit protein uS4.